The primary structure comprises 616 residues: Probable beta-hexosaminidase ARB_01353 (616 aa).

The signal sequence occupies residues 1 to 20 (MRFAKALAITAVLLSGVVEA). Positions 96–117 (KFDPFPDQSSKPKEKRQNAPPG) are disordered. Asn333 carries an N-linked (GlcNAc...) asparagine glycan. Residue Glu361 is the Proton donor of the active site.

This sequence belongs to the glycosyl hydrolase 20 family.

It is found in the secreted. The enzyme catalyses Hydrolysis of terminal non-reducing N-acetyl-D-hexosamine residues in N-acetyl-beta-D-hexosaminides.. Its function is as follows. Beta-hexosaminidase that shows a broad substrate specificity. The polypeptide is Probable beta-hexosaminidase ARB_01353 (Arthroderma benhamiae (strain ATCC MYA-4681 / CBS 112371) (Trichophyton mentagrophytes)).